The sequence spans 505 residues: DNA repair protein RadA (505 aa).

The C4-type zinc-finger motif lies at 10-27; that stretch reads CSACGADHAQWFGRCPKC. 107–114 provides a ligand contact to ATP; the sequence is GDPGIGKS. The RadA KNRFG motif motif lies at 281-285; the sequence is KNRFG. The lon-protease-like stretch occupies residues 380–505; the sequence is DAYLSVAGGL…KIEEDLGKKD (126 aa). A disordered region spans residues 485 to 505; it reads NTTDQGNGSEAKIEEDLGKKD. Residues 495–505 show a composition bias toward basic and acidic residues; that stretch reads AKIEEDLGKKD.

This sequence belongs to the RecA family. RadA subfamily.

Its function is as follows. DNA-dependent ATPase involved in processing of recombination intermediates, plays a role in repairing DNA breaks. Stimulates the branch migration of RecA-mediated strand transfer reactions, allowing the 3' invading strand to extend heteroduplex DNA faster. Binds ssDNA in the presence of ADP but not other nucleotides, has ATPase activity that is stimulated by ssDNA and various branched DNA structures, but inhibited by SSB. Does not have RecA's homology-searching function. In Synechocystis sp. (strain ATCC 27184 / PCC 6803 / Kazusa), this protein is DNA repair protein RadA.